The following is a 457-amino-acid chain: Argininosuccinate lyase (457 aa).

It belongs to the lyase 1 family. Argininosuccinate lyase subfamily.

The protein localises to the cytoplasm. The catalysed reaction is 2-(N(omega)-L-arginino)succinate = fumarate + L-arginine. Its pathway is amino-acid biosynthesis; L-arginine biosynthesis; L-arginine from L-ornithine and carbamoyl phosphate: step 3/3. This is Argininosuccinate lyase from Shewanella sediminis (strain HAW-EB3).